We begin with the raw amino-acid sequence, 327 residues long: Metal-binding protein YtgA (327 aa).

The N-terminal stretch at 1–20 (MDAKMGYIFKVMRWIFCFVA) is a signal peptide. Fe(2+) contacts are provided by His73, His139, His205, and Asp297.

It belongs to the bacterial solute-binding protein 9 family. Monomer.

The protein localises to the periplasm. Part of the ATP-binding cassette (ABC) transport system YtgABCD involved in metal import. Binds Fe(2+), Mn(2+) and Ni(2+), with a preference for Fe(2+) and delivers them to the membrane permease for translocation into the cytoplasm. The polypeptide is Metal-binding protein YtgA (Chlamydia pneumoniae (Chlamydophila pneumoniae)).